The following is a 97-amino-acid chain: Co-chaperonin GroES (97 aa).

The protein belongs to the GroES chaperonin family. As to quaternary structure, heptamer of 7 subunits arranged in a ring. Interacts with the chaperonin GroEL.

The protein localises to the cytoplasm. Functionally, together with the chaperonin GroEL, plays an essential role in assisting protein folding. The GroEL-GroES system forms a nano-cage that allows encapsulation of the non-native substrate proteins and provides a physical environment optimized to promote and accelerate protein folding. GroES binds to the apical surface of the GroEL ring, thereby capping the opening of the GroEL channel. The sequence is that of Co-chaperonin GroES from Serratia proteamaculans (strain 568).